Consider the following 190-residue polypeptide: Segregation and condensation protein B (190 aa).

Belongs to the ScpB family. Homodimer. Homodimerization may be required to stabilize the binding of ScpA to the Smc head domains. Component of a cohesin-like complex composed of ScpA, ScpB and the Smc homodimer, in which ScpA and ScpB bind to the head domain of Smc. The presence of the three proteins is required for the association of the complex with DNA.

The protein localises to the cytoplasm. Its function is as follows. Participates in chromosomal partition during cell division. May act via the formation of a condensin-like complex containing Smc and ScpA that pull DNA away from mid-cell into both cell halves. This is Segregation and condensation protein B from Bacillus cereus (strain ZK / E33L).